A 119-amino-acid chain; its full sequence is Beta-2-microglobulin (119 aa).

The signal sequence occupies residues 1–20 (MARSVVVALLVLLSLSGLEA). The Ig-like C1-type domain maps to 25-114 (PKIQVYSRHP…VTFSTPKTVK (90 aa)). An intrachain disulfide couples Cys45 to Cys100.

It belongs to the beta-2-microglobulin family. In terms of assembly, heterodimer of an alpha chain and a beta chain. Beta-2-microglobulin is the beta-chain of major histocompatibility complex class I molecules.

Its subcellular location is the secreted. Functionally, component of the class I major histocompatibility complex (MHC). Involved in the presentation of peptide antigens to the immune system. The sequence is that of Beta-2-microglobulin (B2M) from Ateles paniscus (Black spider monkey).